Here is an 87-residue protein sequence, read N- to C-terminus: Small ribosomal subunit protein bS20 (87 aa).

The segment at 1-22 (MANHKSALKRHKQSLKRAARNR) is disordered.

It belongs to the bacterial ribosomal protein bS20 family.

Binds directly to 16S ribosomal RNA. In Nitratidesulfovibrio vulgaris (strain DP4) (Desulfovibrio vulgaris), this protein is Small ribosomal subunit protein bS20.